A 247-amino-acid polypeptide reads, in one-letter code: Carboxy-S-adenosyl-L-methionine synthase (247 aa).

S-adenosyl-L-methionine is bound by residues Y40, 65–67 (GAS), 90–91 (DN), 122–123 (DI), N137, and R204.

The protein belongs to the class I-like SAM-binding methyltransferase superfamily. Cx-SAM synthase family. In terms of assembly, homodimer.

The enzyme catalyses prephenate + S-adenosyl-L-methionine = carboxy-S-adenosyl-L-methionine + 3-phenylpyruvate + H2O. Catalyzes the conversion of S-adenosyl-L-methionine (SAM) to carboxy-S-adenosyl-L-methionine (Cx-SAM). This is Carboxy-S-adenosyl-L-methionine synthase from Pseudomonas putida (strain ATCC 700007 / DSM 6899 / JCM 31910 / BCRC 17059 / LMG 24140 / F1).